Reading from the N-terminus, the 459-residue chain is tRNA modification GTPase MnmE (459 aa).

3 residues coordinate (6S)-5-formyl-5,6,7,8-tetrahydrofolate: arginine 23, glutamate 88, and arginine 127. Residues 223-381 (GLDVVIVGKP…LKEYIKDLFF (159 aa)) enclose the TrmE-type G domain. Asparagine 233 provides a ligand contact to K(+). Residues 233–238 (NVGKSS), 252–258 (TEIPGTT), and 277–280 (DTAG) each bind GTP. Residue serine 237 coordinates Mg(2+). Residues threonine 252, isoleucine 254, and threonine 257 each contribute to the K(+) site. Threonine 258 lines the Mg(2+) pocket. Residue lysine 459 coordinates (6S)-5-formyl-5,6,7,8-tetrahydrofolate.

It belongs to the TRAFAC class TrmE-Era-EngA-EngB-Septin-like GTPase superfamily. TrmE GTPase family. As to quaternary structure, homodimer. Heterotetramer of two MnmE and two MnmG subunits. The cofactor is K(+).

Its subcellular location is the cytoplasm. Functionally, exhibits a very high intrinsic GTPase hydrolysis rate. Involved in the addition of a carboxymethylaminomethyl (cmnm) group at the wobble position (U34) of certain tRNAs, forming tRNA-cmnm(5)s(2)U34. This Clostridium tetani (strain Massachusetts / E88) protein is tRNA modification GTPase MnmE.